We begin with the raw amino-acid sequence, 244 residues long: rRNA adenine N-6-methyltransferase (244 aa).

6 residues coordinate S-adenosyl-L-methionine: Asn11, Ile13, Gly38, Glu59, Asp84, and Asn101.

Belongs to the class I-like SAM-binding methyltransferase superfamily. rRNA adenine N(6)-methyltransferase family.

The catalysed reaction is adenosine(2085) in 23S rRNA + 2 S-adenosyl-L-methionine = N(6)-dimethyladenosine(2085) in 23S rRNA + 2 S-adenosyl-L-homocysteine + 2 H(+). In terms of biological role, this protein produces a dimethylation of the adenine residue at position 2085 in 23S rRNA, resulting in reduced affinity between ribosomes and macrolide-lincosamide-streptogramin B antibiotics. The sequence is that of rRNA adenine N-6-methyltransferase (ermC') from Bacillus subtilis.